A 254-amino-acid chain; its full sequence is UPF0246 protein FTN_1542 (254 aa).

The protein belongs to the UPF0246 family.

In Francisella tularensis subsp. novicida (strain U112), this protein is UPF0246 protein FTN_1542.